Reading from the N-terminus, the 318-residue chain is Acetyl-coenzyme A carboxylase carboxyl transferase subunit alpha (318 aa).

The 262-residue stretch at aspartate 32–glutamate 293 folds into the CoA carboxyltransferase C-terminal domain.

This sequence belongs to the AccA family. Acetyl-CoA carboxylase is a heterohexamer composed of biotin carboxyl carrier protein (AccB), biotin carboxylase (AccC) and two subunits each of ACCase subunit alpha (AccA) and ACCase subunit beta (AccD).

Its subcellular location is the cytoplasm. It catalyses the reaction N(6)-carboxybiotinyl-L-lysyl-[protein] + acetyl-CoA = N(6)-biotinyl-L-lysyl-[protein] + malonyl-CoA. It functions in the pathway lipid metabolism; malonyl-CoA biosynthesis; malonyl-CoA from acetyl-CoA: step 1/1. Its function is as follows. Component of the acetyl coenzyme A carboxylase (ACC) complex. First, biotin carboxylase catalyzes the carboxylation of biotin on its carrier protein (BCCP) and then the CO(2) group is transferred by the carboxyltransferase to acetyl-CoA to form malonyl-CoA. The polypeptide is Acetyl-coenzyme A carboxylase carboxyl transferase subunit alpha (Syntrophomonas wolfei subsp. wolfei (strain DSM 2245B / Goettingen)).